The primary structure comprises 962 residues: Glycine dehydrogenase (decarboxylating) (962 aa).

At lysine 709 the chain carries N6-(pyridoxal phosphate)lysine.

This sequence belongs to the GcvP family. The glycine cleavage system is composed of four proteins: P, T, L and H. It depends on pyridoxal 5'-phosphate as a cofactor.

It carries out the reaction N(6)-[(R)-lipoyl]-L-lysyl-[glycine-cleavage complex H protein] + glycine + H(+) = N(6)-[(R)-S(8)-aminomethyldihydrolipoyl]-L-lysyl-[glycine-cleavage complex H protein] + CO2. The glycine cleavage system catalyzes the degradation of glycine. The P protein binds the alpha-amino group of glycine through its pyridoxal phosphate cofactor; CO(2) is released and the remaining methylamine moiety is then transferred to the lipoamide cofactor of the H protein. This Shewanella loihica (strain ATCC BAA-1088 / PV-4) protein is Glycine dehydrogenase (decarboxylating).